Reading from the N-terminus, the 951-residue chain is MIGALARKFFGSANDRRVKGYQARVKAINGLEPEIAALSDEALRARTAEFRQQLADGKTLDDILVPAFATVREAGKRTLGQRHFDVQLIGGMVLHEGDIAEMKTGEGKTLVATLAVYLNALAGKGVHVVTVNDYLASRDAGWMAQIYTFLGLTTGVIVHGLDDVERKAAYACDITYGTNNEYGFDYLRDNMKYRLEDMVQREHFYAIVDEVDSILIDEARTPLIISGPLDDRSEFYNTIDTFMPNLEKVADYEVDEKQRTVALTEAGMEKIETLLRDAGQLKGDSLYDVENVSVVHHINQALRAHSLFTRDKDYIVRDDEVVIIDEFTGRMMQGRRYSEGLHQALEAKEHVTVQPENQTLASITFQNYFRMYKKLSGMTGTALTEADELADIYKLEVVEIPTNLPIARLDEDDEVYRTQNEKYAAILAEVERANARMQPVLVGTASIEKSEVLADYLKKNGYKLIDFGDPKSMRKLYAAARAGKPAKLFAVLNARFHEQEAYIVAEAGVPGAITIATNMAGRGTDIKLGGSLEMRAQFETADLADEAEKDAKIAEIKADIERFRDMVLKAEDVVEIEPAKGSKPAKTVTRPGGLYIIGSERHESRRIDNQLRGRSGRQGDPGRSKFFLSLEDDLMRIFGSDRLDTMLQRLGLKDGEAITHPWINKALEKAQQKVEARNFDIRKNLLKYDDVQNDQRKVIFDQRVDLMMNESVAETVADMRHAFVDDLVTKHVPENQYAEQWDVAGLKEELRRVLDIDLPVDEWAAEEGIADEELLSRIENRVDEHMAAKVGQWGPDVMRYVEKTILLQTLDHLWREHLVMLDHLRQVIGLRGYGQRDPLQEYKSEAFSLFEALIAHLREAVTGQLMRVEIVPPEEEQPVLPAMEVHKLDPHTGEDEMAFAQGNFAQASLAPVVSADRSSRDPGNPASWGKVGRNEDCPCGSGKKYKHCHGR.

Residues Gln-87, Gly-105–Thr-109, and Asp-525 contribute to the ATP site. The segment at Pro-911 to Gly-942 is disordered. 4 residues coordinate Zn(2+): Cys-937, Cys-939, Cys-948, and His-949.

This sequence belongs to the SecA family. Monomer and homodimer. Part of the essential Sec protein translocation apparatus which comprises SecA, SecYEG and auxiliary proteins SecDF-YajC and YidC. Zn(2+) serves as cofactor.

The protein localises to the cell inner membrane. Its subcellular location is the cytoplasm. It catalyses the reaction ATP + H2O + cellular proteinSide 1 = ADP + phosphate + cellular proteinSide 2.. Functionally, part of the Sec protein translocase complex. Interacts with the SecYEG preprotein conducting channel. Has a central role in coupling the hydrolysis of ATP to the transfer of proteins into and across the cell membrane, serving both as a receptor for the preprotein-SecB complex and as an ATP-driven molecular motor driving the stepwise translocation of polypeptide chains across the membrane. This Nitrobacter hamburgensis (strain DSM 10229 / NCIMB 13809 / X14) protein is Protein translocase subunit SecA 1.